Here is a 230-residue protein sequence, read N- to C-terminus: Ribose-5-phosphate isomerase A (230 aa).

Substrate-binding positions include 31–34 (TGST), 88–91 (DGSD), and 101–104 (KGGG). The active-site Proton acceptor is Glu110. Lys128 contributes to the substrate binding site.

This sequence belongs to the ribose 5-phosphate isomerase family. Homodimer.

It carries out the reaction aldehydo-D-ribose 5-phosphate = D-ribulose 5-phosphate. It participates in carbohydrate degradation; pentose phosphate pathway; D-ribose 5-phosphate from D-ribulose 5-phosphate (non-oxidative stage): step 1/1. Functionally, catalyzes the reversible conversion of ribose-5-phosphate to ribulose 5-phosphate. This is Ribose-5-phosphate isomerase A from Lactobacillus helveticus (strain DPC 4571).